Reading from the N-terminus, the 151-residue chain is Cytochrome c-type biogenesis protein CcmE (151 aa).

Over 1-8 (MNPQRKKR) the chain is Cytoplasmic. A helical; Signal-anchor for type II membrane protein transmembrane segment spans residues 9–29 (LFLILGLLAGVAVAVGFALSA). Topologically, residues 30 to 151 (LQQNINLFYT…QAASGAEAKP (122 aa)) are periplasmic. Residues histidine 124 and tyrosine 128 each coordinate heme.

Belongs to the CcmE/CycJ family.

Its subcellular location is the cell inner membrane. Its function is as follows. Heme chaperone required for the biogenesis of c-type cytochromes. Transiently binds heme delivered by CcmC and transfers the heme to apo-cytochromes in a process facilitated by CcmF and CcmH. The sequence is that of Cytochrome c-type biogenesis protein CcmE from Pseudomonas putida (strain W619).